A 147-amino-acid polypeptide reads, in one-letter code: Prefoldin subunit alpha (147 aa).

Belongs to the prefoldin alpha subunit family. As to quaternary structure, heterohexamer of two alpha and four beta subunits.

Its subcellular location is the cytoplasm. Functionally, molecular chaperone capable of stabilizing a range of proteins. Seems to fulfill an ATP-independent, HSP70-like function in archaeal de novo protein folding. The sequence is that of Prefoldin subunit alpha from Saccharolobus islandicus (strain M.16.27) (Sulfolobus islandicus).